Reading from the N-terminus, the 287-residue chain is Hydroxysteroid 11-beta-dehydrogenase 1-like protein (287 aa).

A signal peptide spans 1-20 (MMKPFGKVLCAAGSLAVLLA). NADP(+) contacts are provided by residues 41–67 (GASAGIGEQMAYHYATFGAEIVLTARR), 92–93 (DM), and 119–121 (NHI). Substrate is bound at residue Ser-170. Catalysis depends on Tyr-183, which acts as the Proton acceptor. Residues 183–187 (YSATK) and 216–222 (GLIDTDA) each bind NADP(+).

Belongs to the short-chain dehydrogenases/reductases (SDR) family.

It is found in the secreted. The catalysed reaction is cortisone + NADPH + H(+) = cortisol + NADP(+). Unidirectional NADP(+)-dependent cortisol dehydrogenase (in vitro). In Gallus gallus (Chicken), this protein is Hydroxysteroid 11-beta-dehydrogenase 1-like protein (HSD11B1L).